A 63-amino-acid chain; its full sequence is Large ribosomal subunit protein uL29 (63 aa).

Belongs to the universal ribosomal protein uL29 family.

In Baumannia cicadellinicola subsp. Homalodisca coagulata, this protein is Large ribosomal subunit protein uL29.